Reading from the N-terminus, the 79-residue chain is MRLIIRAIVLLALVWIGLLMSGYGILVGSKVNAAGLGLQCHYLTARGTSTAQYLHTNSGIIGFSDCPIFRKIATVVDNG.

An N-terminal signal peptide occupies residues methionine 1 to alanine 33.

This is an uncharacterized protein from Salmonella typhi.